A 297-amino-acid polypeptide reads, in one-letter code: Phosphatidylserine decarboxylase proenzyme (297 aa).

Catalysis depends on charge relay system; for autoendoproteolytic cleavage activity residues Asp-100, His-157, and Ser-263. Catalysis depends on Ser-263, which acts as the Schiff-base intermediate with substrate; via pyruvic acid; for decarboxylase activity. Pyruvic acid (Ser); by autocatalysis is present on Ser-263.

The protein belongs to the phosphatidylserine decarboxylase family. PSD-B subfamily. Prokaryotic type I sub-subfamily. As to quaternary structure, heterodimer of a large membrane-associated beta subunit and a small pyruvoyl-containing alpha subunit. Requires pyruvate as cofactor. In terms of processing, is synthesized initially as an inactive proenzyme. Formation of the active enzyme involves a self-maturation process in which the active site pyruvoyl group is generated from an internal serine residue via an autocatalytic post-translational modification. Two non-identical subunits are generated from the proenzyme in this reaction, and the pyruvate is formed at the N-terminus of the alpha chain, which is derived from the carboxyl end of the proenzyme. The autoendoproteolytic cleavage occurs by a canonical serine protease mechanism, in which the side chain hydroxyl group of the serine supplies its oxygen atom to form the C-terminus of the beta chain, while the remainder of the serine residue undergoes an oxidative deamination to produce ammonia and the pyruvoyl prosthetic group on the alpha chain. During this reaction, the Ser that is part of the protease active site of the proenzyme becomes the pyruvoyl prosthetic group, which constitutes an essential element of the active site of the mature decarboxylase.

The protein resides in the cell membrane. It catalyses the reaction a 1,2-diacyl-sn-glycero-3-phospho-L-serine + H(+) = a 1,2-diacyl-sn-glycero-3-phosphoethanolamine + CO2. It participates in phospholipid metabolism; phosphatidylethanolamine biosynthesis; phosphatidylethanolamine from CDP-diacylglycerol: step 2/2. Catalyzes the formation of phosphatidylethanolamine (PtdEtn) from phosphatidylserine (PtdSer). The polypeptide is Phosphatidylserine decarboxylase proenzyme (Glaesserella parasuis serovar 5 (strain SH0165) (Haemophilus parasuis)).